Consider the following 135-residue polypeptide: Transmembrane protein 107 (135 aa).

Helical transmembrane passes span 7-27, 55-75, 83-103, and 110-130; these read LVPARFLTLTAHLVIIITIFW, VALSVTLALFVLELAGFLSGV, ALLSLITHSSACVCLSFFVFH, and YWIIFSICSVFPAVVELFLLL.

It localises to the membrane. Its function is as follows. May play a role in cilia formation and embryonic patterning. This chain is Transmembrane protein 107 (tmem107), found in Danio rerio (Zebrafish).